Consider the following 424-residue polypeptide: 26S proteasome regulatory subunit 4 homolog (424 aa).

Over residues 1 to 11 (MSRDKSERDNL) the composition is skewed to basic and acidic residues. A disordered region spans residues 1–33 (MSRDKSERDNLQDTTTINLRRRRRVKEGKAASK). Residue 210–217 (GLPGTGKT) coordinates ATP.

It belongs to the AAA ATPase family. In terms of assembly, the 26S proteasome consists of a 20S proteasome core and two 19S regulatory subunits. The 20S proteasome core is composed of 28 subunits that are arranged in four stacked rings, resulting in a barrel-shaped structure. The two end rings are each formed by seven alpha subunits, and the two central rings are each formed by seven beta subunits. The catalytic chamber with the active sites is on the inside of the barrel.

Its subcellular location is the cytoplasm. The protein localises to the nucleus. In terms of biological role, acts as a regulatory subunit of the 26S proteasome which degrades poly-ubiquitinated proteins in the cytoplasm and in the nucleus. It is essential for the regulated turnover of proteins and for the removal of misfolded proteins. The proteasome is a multicatalytic proteinase complex that is characterized by its ability to cleave peptides with Arg, Phe, Tyr, Leu, and Glu adjacent to the leaving group at neutral or slightly basic pH. In Encephalitozoon cuniculi (strain GB-M1) (Microsporidian parasite), this protein is 26S proteasome regulatory subunit 4 homolog (RPT2).